The primary structure comprises 125 residues: Small ribosomal subunit protein bS6 (125 aa).

It belongs to the bacterial ribosomal protein bS6 family.

Functionally, binds together with bS18 to 16S ribosomal RNA. In Pasteurella multocida (strain Pm70), this protein is Small ribosomal subunit protein bS6 (rpsF).